The primary structure comprises 226 residues: Probable septum site-determining protein MinC (226 aa).

It belongs to the MinC family. As to quaternary structure, interacts with MinD and FtsZ.

In terms of biological role, cell division inhibitor that blocks the formation of polar Z ring septums. Rapidly oscillates between the poles of the cell to destabilize FtsZ filaments that have formed before they mature into polar Z rings. Prevents FtsZ polymerization. The sequence is that of Probable septum site-determining protein MinC from Bacillus velezensis (strain DSM 23117 / BGSC 10A6 / LMG 26770 / FZB42) (Bacillus amyloliquefaciens subsp. plantarum).